The following is a 224-amino-acid chain: Late embryogenesis abundant protein, group 3 (224 aa).

2 disordered regions span residues 1–169 (MASN…KDKT) and 193–224 (NTLG…TRNH). Basic and acidic residues predominate over residues 13–23 (GETKARNEEKT). Repeat copies occupy residues 26–36 (VMGATKDKAGQ), 37–47 (TTEATKQKAGE), 48–58 (TTEATKQKAAE), 59–69 (TTEAAKQKASE), and 70–80 (TAEATKQKAAE). The interval 26-153 (VMGATKDKAG…TEAAKQKASE (128 aa)) is 12 X 11 AA tandem repeats. Basic and acidic residues-rich tracts occupy residues 41–85 (TKQK…KDKT), 92–109 (AKEK…RAAQ), and 120–151 (EKTE…KQKA). A 6; truncated repeat occupies 81–87 (AKDKTAQ). Tandem repeats lie at residues 88-98 (TAQAAKEKTYE), 99-109 (TAQSAKERAAQ), 121-131 (KTEAAKQKAAE), 132-142 (TTEAARQKAAE), and 143-153 (ATEAAKQKASE). Positions 200–224 (DNTITTKDNTTGATTKDTTTTTRNH) are enriched in low complexity.

Belongs to the LEA type 4 family.

The polypeptide is Late embryogenesis abundant protein, group 3 (Triticum aestivum (Wheat)).